A 413-amino-acid chain; its full sequence is Monacolin J acid methylbutanoyltransferase (413 aa).

Monacolin J is bound at residue Arg73. The active-site Acyl-ester intermediate is the Ser76. Residues Arg173, Tyr188, and Tyr258 each coordinate monacolin J. Gly366 is a 2-methylbutanoate binding site. Monacolin J contacts are provided by Glu388 and Trp390.

This sequence belongs to the class-A beta-lactamase family. In terms of assembly, interacts with LovF.

The catalysed reaction is monacolin J carboxylate + (S)-2-methylbutanoyl-[2-methylbutanoate polyketide synthase] = lovastatin carboxylate + holo-[2-methylbutanoate polyketide synthase]. The protein operates within polyketide biosynthesis; lovastatin biosynthesis. In terms of biological role, monacolin J acid methylbutanoyltransferase; part of the gene cluster that mediates the biosynthesis of lovastatin (also known as mevinolin, mevacor or monacolin K), a hypolipidemic inhibitor of (3S)-hydroxymethylglutaryl-coenzyme A (HMG-CoA) reductase (HMGR). The first step in the biosynthesis of lovastatin is the production of dihydromonacolin L acid by the lovastatin nonaketide synthase lovB and the trans-acting enoyl reductase lovC via condensation of one acetyl-CoA unit and 8 malonyl-CoA units. Dihydromonacolin L acid is released from lovB by the thioesterase lovG. Next, dihydromonacolin L acid is oxidized by the dihydromonacolin L monooxygenase lovA twice to form monacolin J acid. The 2-methylbutyrate moiety of lovastatin is synthesized by the lovastatin diketide synthase lovF via condensation of one acetyl-CoA unit and one malonyl-CoA unit. Finally, the covalent attachment of this moiety to monacolin J acid is catalyzed by the transesterase lovD to yield lovastatin. LovD has broad substrate specificity and can also convert monacolin J to simvastatin using alpha-dimethylbutanoyl-S-methyl-3-mercaptopropionate (DMB-S-MMP) as the thioester acyl donor, and can also catalyze the reverse reaction and function as hydrolase in vitro. LovD has much higher activity with LovF-bound 2-methylbutanoate than with free diketide substrates. This Aspergillus terreus protein is Monacolin J acid methylbutanoyltransferase.